Here is a 224-residue protein sequence, read N- to C-terminus: Cytidylate kinase (224 aa).

Residue 13–21 (GPSASGKGT) coordinates ATP.

It belongs to the cytidylate kinase family. Type 1 subfamily.

Its subcellular location is the cytoplasm. It carries out the reaction CMP + ATP = CDP + ADP. The enzyme catalyses dCMP + ATP = dCDP + ADP. This chain is Cytidylate kinase, found in Nitrosomonas eutropha (strain DSM 101675 / C91 / Nm57).